The following is a 130-amino-acid chain: Ribonuclease P protein component 2 (130 aa).

It belongs to the eukaryotic/archaeal RNase P protein component 2 family. As to quaternary structure, consists of a catalytic RNA component and at least 4-5 protein subunits.

The protein resides in the cytoplasm. The catalysed reaction is Endonucleolytic cleavage of RNA, removing 5'-extranucleotides from tRNA precursor.. Functionally, part of ribonuclease P, a protein complex that generates mature tRNA molecules by cleaving their 5'-ends. The chain is Ribonuclease P protein component 2 from Methanococcus maripaludis (strain C5 / ATCC BAA-1333).